The following is a 126-amino-acid chain: FCS-Like Zinc finger 17 (126 aa).

The FLZ-type zinc-finger motif lies at 41–85 (CFLKTCHLCNKQLHQDKDVYMYRGDLGFCSRECRESQMLIDDRKE).

This sequence belongs to the FLZ family. In terms of assembly, interacts with KIN10 and KIN11 via its FLZ-type zinc finger domain. Forms heterodimer with FLZ2 in vitro.

The protein localises to the nucleus. Its subcellular location is the cytoplasm. May act as an adapter to facilitate the interaction of SnRK1 complex with effector proteins, conferring tissue- and stimulus-type specific differences in the SnRK1 regulation pathway. This chain is FCS-Like Zinc finger 17, found in Arabidopsis thaliana (Mouse-ear cress).